A 7968-amino-acid polypeptide reads, in one-letter code: Obscurin (7968 aa).

Ig-like domains lie at P10–D100, P110–D202, P236–S322, P331–A414, and G420–P508. An intrachain disulfide couples C31 to C82. The tract at residues E228 to V249 is disordered. Polar residues predominate over residues P240 to V249. 2 disulfides stabilise this stretch: C259–C311 and C354–C404. A Phosphoserine modification is found at S395. A Fibronectin type-III 1 domain is found at P515–K612. Ig-like domains are found at residues L619–R698, P701–S790, L798–S884, P886–E977, P978–H1066, P1070–E1161, P1162–T1252, P1254–E1345, P1346–S1432, P1438–H1524, P1530–E1621, and P1622–S1719. Intrachain disulfides connect C819/C870, C912/C962, C1004/C1054, C1096/C1146, C1188/C1238, C1280/C1330, C1372/C1422, C1464/C1514, C1556/C1606, C1648/C1698, C1723/C1791, and C1830/C1880. The Fibronectin type-III 2 domain maps to K1731 to A1808. 29 Ig-like domains span residues A1809 to S1894, P1896 to R1982, P1987 to T2071, V2077 to T2162, P2165 to K2249, P2289 to T2380, P2468 to T2559, L2564 to R2643, P2646 to R2730, V2736 to R2823, P2826 to S2908, E2920 to L2999, R3003 to T3092, P3095 to R3183, P3184 to T3268, P3273 to T3356, P3359 to T3444, P3449 to T3532, P3537 to T3620, P3625 to T3708, P3713 to T3796, P3801 to T3884, P3890 to T3973, P3978 to S4062, P4068 to T4160, T4171 to S4239, P4248 to T4337, N4340 to V4427, and W4430 to T4518. 3 cysteine pairs are disulfide-bonded: C2187/C2237, C2311/C2361, and C2490/C2540. A disulfide bridge connects residues C2668 and C2718. 2 disulfides stabilise this stretch: C2848/C2898 and C2937/C2987. At S2889 the chain carries Phosphoserine. Cystine bridges form between C3117–C3167, C3206–C3256, C3295–C3344, C3383–C3432, C3471–C3520, C3559–C3608, C3647–C3696, C3735–C3784, C3823–C3872, C3911–C3961, C4000–C4050, and C4089–C4141. S4015 is modified (phosphoserine). C4453 and C4508 are oxidised to a cystine. Residues P4525 to P4619 enclose the Fibronectin type-III 3 domain. Residues P4624–S4714 enclose the Ig-like 47 domain. The interval M4749 to G4785 is disordered. S4750 is modified (phosphoserine). Residue T4754 is modified to Phosphothreonine. Residue S4757 is modified to Phosphoserine. Residue T4788 is modified to Phosphothreonine. S4805 is subject to Phosphoserine. The segment at L4820 to G4860 is disordered. Residues M4872–S4901 form the IQ domain. Ig-like domains follow at residues P4898–S4989 and P5126–R5215. 2 disulfides stabilise this stretch: C4919–C4971 and C5147–C5199. Residues A5238–E5256 show a composition bias toward polar residues. The disordered stretch occupies residues A5238–G5257. 2 Ig-like domains span residues P5260–L5349 and P5371–S5467. The segment at A5554–D5596 is disordered. The residue at position 5563 (S5563) is a Phosphoserine. T5569 is subject to Phosphothreonine. Positions P5570–S5589 are enriched in low complexity. Phosphoserine occurs at positions 5571 and 5573. Residues E5600 to K5667 form the SH3 domain. The DH domain maps to R5693 to K5877. Residues E5895 to Q6004 form the PH domain. R5975 contacts a 1,2-diacyl-sn-glycero-3-phospho-(1D-myo-inositol-4,5-bisphosphate). R5980 is an a 1,2-diacyl-sn-glycero-3-phospho-(1D-myo-inositol-3,4-bisphosphate) binding site. Ig-like domains follow at residues P6014 to S6097 and P6108 to Q6200. Intrachain disulfides connect C6035-C6087 and C6129-C6182. A disordered region spans residues R6237–E6296. Residues E6266–S6277 show a composition bias toward polar residues. An Ig-like 54 domain is found at P6357–L6445. Positions Y6468–F6721 constitute a Protein kinase 1 domain. Residues I6474–V6482 and K6497 contribute to the ATP site. Catalysis depends on D6587, which acts as the Proton acceptor. Disordered regions lie at residues G6777–C6863, S6952–K7176, and V7217–E7272. S6831 is subject to Phosphoserine. Residues A7052 to F7061 show a composition bias toward pro residues. Residues S7115 to G7139 are compositionally biased toward low complexity. Over residues D7160–A7172 the composition is skewed to polar residues. A compositionally biased stretch (basic and acidic residues) spans E7227–A7242. S7244 is modified (phosphoserine). Positions P7463–R7552 constitute an Ig-like 55 domain. C7484 and C7536 are disulfide-bonded. The Fibronectin type-III 4 domain maps to P7557 to P7649. Positions F7672–L7924 constitute a Protein kinase 2 domain. ATP-binding positions include I7678 to V7686 and K7701. The active-site Proton acceptor is the D7791.

This sequence belongs to the protein kinase superfamily. CAMK Ser/Thr protein kinase family. In terms of assembly, interacts (via protein kinase domain 2) with CDH2 and (via protein kinase domain 1) with ATP1B1. Isoform 3 interacts with TTN/titin and calmodulin. Isoform 3 interacts with ANK1 isoform Mu17/ank1.5. Mg(2+) is required as a cofactor. In terms of processing, autophosphorylated by protein kinase domains 1 and 2.

It localises to the cytoplasm. It is found in the myofibril. The protein resides in the sarcomere. Its subcellular location is the m line. The protein localises to the z line. It localises to the cell membrane. It is found in the sarcolemma. The protein resides in the nucleus. It carries out the reaction L-seryl-[protein] + ATP = O-phospho-L-seryl-[protein] + ADP + H(+). The enzyme catalyses L-threonyl-[protein] + ATP = O-phospho-L-threonyl-[protein] + ADP + H(+). Its function is as follows. Structural component of striated muscles which plays a role in myofibrillogenesis. Probably involved in the assembly of myosin into sarcomeric A bands in striated muscle. Has serine/threonine protein kinase activity and phosphorylates N-cadherin CDH2 and sodium/potassium-transporting ATPase subunit ATP1B1. Binds (via the PH domain) strongly to phosphatidylinositol 3,4-bisphosphate (PtdIns(3,4)P2) and phosphatidylinositol 4,5-bisphosphate (PtdIns(4,5)P2), and to a lesser extent to phosphatidylinositol 3-phosphate (PtdIns(3)P), phosphatidylinositol 4-phosphate (PtdIns(4)P), phosphatidylinositol 5-phosphate (PtdIns(5)P) and phosphatidylinositol 3,4,5-trisphosphate (PtdIns(3,4,5)P3). The polypeptide is Obscurin (OBSCN) (Homo sapiens (Human)).